Reading from the N-terminus, the 256-residue chain is Imidazole glycerol phosphate synthase subunit HisF (256 aa).

Active-site residues include aspartate 12 and aspartate 131.

The protein belongs to the HisA/HisF family. In terms of assembly, heterodimer of HisH and HisF.

The protein localises to the cytoplasm. The catalysed reaction is 5-[(5-phospho-1-deoxy-D-ribulos-1-ylimino)methylamino]-1-(5-phospho-beta-D-ribosyl)imidazole-4-carboxamide + L-glutamine = D-erythro-1-(imidazol-4-yl)glycerol 3-phosphate + 5-amino-1-(5-phospho-beta-D-ribosyl)imidazole-4-carboxamide + L-glutamate + H(+). The protein operates within amino-acid biosynthesis; L-histidine biosynthesis; L-histidine from 5-phospho-alpha-D-ribose 1-diphosphate: step 5/9. Its function is as follows. IGPS catalyzes the conversion of PRFAR and glutamine to IGP, AICAR and glutamate. The HisF subunit catalyzes the cyclization activity that produces IGP and AICAR from PRFAR using the ammonia provided by the HisH subunit. In Bifidobacterium longum (strain DJO10A), this protein is Imidazole glycerol phosphate synthase subunit HisF.